The following is a 220-amino-acid chain: Urease accessory protein UreF (220 aa).

This sequence belongs to the UreF family. In terms of assembly, ureD, UreF and UreG form a complex that acts as a GTP-hydrolysis-dependent molecular chaperone, activating the urease apoprotein by helping to assemble the nickel containing metallocenter of UreC. The UreE protein probably delivers the nickel.

Its subcellular location is the cytoplasm. Its function is as follows. Required for maturation of urease via the functional incorporation of the urease nickel metallocenter. The sequence is that of Urease accessory protein UreF from Bordetella bronchiseptica (strain ATCC BAA-588 / NCTC 13252 / RB50) (Alcaligenes bronchisepticus).